A 367-amino-acid polypeptide reads, in one-letter code: MNSSQTLVIKLGTSVLTGGSRRLNRAHIVELVRQCAPLHAAGHRIIIVTSGAIAAGREYLNYPELPATIASKQLLAAVGQSRLIQFWEQLFSLYNIHIGQMLLTRADMEDRERFLNARDTLRALLDNGIVPVINENDAVATAEIKVGDNDNLSALVAILADADKLLLLTDQPGLFSADPRTNPDAELIREVEGINDALRKMAGGSVSGLGTGGMETKLQAAEVANRAGIEVVIAAGGKPGVIGDMMAGASVGTRFHGQKMPLESRKRWLFGPPPAGDITVDDGALKAILQRGSSLLPKGILAVEGDFSRGIVVRIRSTDGRDIAHGVSRYNSDALRMIAGHHSQDISDILGYEYGPVVIHRDDMILC.

K10 provides a ligand contact to ATP. Residues S50, D137, and N149 each contribute to the substrate site. Residues 169–170 (TD) and 211–217 (TGGMETK) each bind ATP. Residues 275–353 (AGDITVDDGA…QDISDILGYE (79 aa)) form the PUA domain.

Belongs to the glutamate 5-kinase family.

The protein localises to the cytoplasm. It carries out the reaction L-glutamate + ATP = L-glutamyl 5-phosphate + ADP. It functions in the pathway amino-acid biosynthesis; L-proline biosynthesis; L-glutamate 5-semialdehyde from L-glutamate: step 1/2. Functionally, catalyzes the transfer of a phosphate group to glutamate to form L-glutamate 5-phosphate. This chain is Glutamate 5-kinase, found in Sodalis glossinidius (strain morsitans).